We begin with the raw amino-acid sequence, 847 residues long: MSKSFQQSSLSRDSQGHGRDLSAAGIGLLAAATQSLSMPASLGRMNQGTARLASLMNLGMSSSLNQQGAHSALSSASTSSHNLQSIFNIGSRGPLPLSSQHRGDADQASNILASFGLSARDLDELSRYPEDKITPENLPQILLQLKRRRTEEGPTLSYGRDGRSATREPPYRVPRDDWEEKRHFRRDSFDDRGPSLNPVLDYDHGSRSQESGYYDRMDYEDDRLRDGERCRDDSFFGETSHNYHKFDSEYERMGRGPGPLQERSLFEKKRGAPPSSNIEDFHGLLPKGYPHLCSICDLPVHSNKEWSQHINGASHSRRCQLLLEIYPEWNPDNDTGHTMGDPFMLQQSTNPAPGILGPPPPSFHLGGPAVGPRGNLGAGNGNLQGPRHMQKGRVETSRVVHIMDFQRGKNLRYQLLQLVEPFGVISNHLILNKINEAFIEMATTEDAQAAVDYYTTTPALVFGKPVRVHLSQKYKRIKKPEGKPDQKFDQKQELGRVIHLSNLPHSGYSDSAVLKLAEPYGKIKNYILMRMKSQAFIEMETREDAMAMVDHCLKKALWFQGRCVKVDLSEKYKKLVLRIPNRGIDLLKKDKSRKRSYSPDGKESPSDKKSKTDGSQKTESSTEGKEQEEKSGEDGEKDTKDDQTEQEPNMLLESEDELLVDEEEAAALLESGSSVGDETDLANLGDVASDGKKEPSDKAVKKDGSASAAAKKKLKKVDKIEELDQENEAALENGIKNEENTEPGAESSENADDPNKDTSENADGQSDENKDDYTIPDEYRIGPYQPNVPVGIDYVIPKTGFYCKLCSLFYTNEEVAKNTHCSSLPHYQKLKKFLNKLAEERRQKKET.

Residue Ser-2 is modified to N-acetylserine. The residue at position 3 (Lys-3) is an N6-acetyllysine; alternate. Lys-3 participates in a covalent cross-link: Glycyl lysine isopeptide (Lys-Gly) (interchain with G-Cter in SUMO2); alternate. A phosphoserine mark is found at Ser-4, Ser-9, Ser-11, Ser-14, Ser-22, Ser-41, Ser-118, and Ser-126. Residues Lys-132 and Lys-146 each participate in a glycyl lysine isopeptide (Lys-Gly) (interchain with G-Cter in SUMO2) cross-link. 2 disordered regions span residues Lys-146–Pro-174 and Asp-187–Tyr-214. Phosphothreonine is present on Thr-150. Ser-157 carries the phosphoserine modification. Tyr-158 carries the post-translational modification Phosphotyrosine. The segment covering Arg-160–Pro-174 has biased composition (basic and acidic residues). Phosphoserine is present on residues Ser-164, Ser-188, and Ser-195. The segment covering Asp-201–Tyr-214 has biased composition (basic and acidic residues). Residue Tyr-202 is modified to Phosphotyrosine. Phosphoserine occurs at positions 206, 208, and 211. Tyr-219 is modified (phosphotyrosine). Ser-234 carries the post-translational modification Phosphoserine. Lys-245 participates in a covalent cross-link: Glycyl lysine isopeptide (Lys-Gly) (interchain with G-Cter in SUMO2). At Ser-264 the chain carries Phosphoserine. A Glycyl lysine isopeptide (Lys-Gly) (interchain with G-Cter in SUMO2) cross-link involves residue Lys-269. Ser-275 is subject to Phosphoserine. The segment at Pro-342–Val-394 is disordered. Residues Arg-398–Lys-473 form the RRM 1 domain. Glycyl lysine isopeptide (Lys-Gly) (interchain with G-Cter in SUMO2) cross-links involve residues Lys-478, Lys-487, and Lys-491. The 76-residue stretch at Arg-496 to Lys-571 folds into the RRM 2 domain. Phosphoserine is present on residues Ser-509 and Ser-511. Lys-515 participates in a covalent cross-link: Glycyl lysine isopeptide (Lys-Gly) (interchain with G-Cter in SUMO2). Lys-522 bears the N6-acetyllysine; alternate mark. Residue Lys-522 forms a Glycyl lysine isopeptide (Lys-Gly) (interchain with G-Cter in SUMO2); alternate linkage. Ser-533 is subject to Phosphoserine. Glycyl lysine isopeptide (Lys-Gly) (interchain with G-Cter in SUMO2) cross-links involve residues Lys-554 and Lys-555. Lys-571 carries the post-translational modification N6-acetyllysine. A disordered region spans residues Lys-588 to Pro-786. 4 positions are modified to phosphoserine: Ser-596, Ser-598, Ser-604, and Ser-606. Residues Asp-600 to Gln-643 show a composition bias toward basic and acidic residues. Glycyl lysine isopeptide (Lys-Gly) (interchain with G-Cter in SUMO2) cross-links involve residues Lys-617 and Lys-630. The segment covering Glu-653–Ala-665 has biased composition (acidic residues). A phosphoserine mark is found at Ser-654, Ser-671, Ser-673, and Ser-674. Positions Ala-666 to Gly-676 are enriched in low complexity. Thr-679 is modified (phosphothreonine). The residue at position 689 (Ser-689) is a Phosphoserine. The segment covering Ser-689–Gly-704 has biased composition (basic and acidic residues). The short motif at Ala-710–Asp-718 is the Nuclear localization signal element. Residues Lys-719 and Lys-736 each participate in a glycyl lysine isopeptide (Lys-Gly) (interchain with G-Cter in SUMO2) cross-link. Thr-741 carries the post-translational modification Phosphothreonine. Residues Ser-747, Ser-759, and Ser-766 each carry the phosphoserine modification. Positions Asp-767–Arg-780 are enriched in basic and acidic residues. A Glycyl lysine isopeptide (Lys-Gly) (interchain with G-Cter in SUMO2) cross-link involves residue Lys-770. The Matrin-type zinc-finger motif lies at Phe-801 to Lys-832. An N6-acetyllysine; alternate modification is found at Lys-836. Lys-836 is covalently cross-linked (Glycyl lysine isopeptide (Lys-Gly) (interchain with G-Cter in SUMO2); alternate).

Part of a complex consisting of SFPQ, NONO and MATR3. Interacts with AGO1 and AGO2. Part of a complex composed at least of ASH2L, EMSY, HCFC1, HSPA8, CCAR2, MATR3, MKI67, RBBP5, TUBB2A, WDR5 and ZNF335; this complex may have a histone H3-specific methyltransferase activity. Interacts with TARDBP. Part of the HDP-RNP complex composed of at least HEXIM1, PRKDC, XRCC5, XRCC6, paraspeckle proteins (SFPQ, NONO, PSPC1, RBM14, and MATR3) and NEAT1 RNA. Interacts with FUS. Interacts with IGF2BP1; the interaction is enhanced by SEPIN14P20 peptide RBPR. Interacts with IGF2BP2 and IGF2BP3. Interacts with RBPMS.

The protein resides in the nucleus matrix. Functionally, may play a role in transcription or may interact with other nuclear matrix proteins to form the internal fibrogranular network. In association with the SFPQ-NONO heteromer may play a role in nuclear retention of defective RNAs. Plays a role in the regulation of DNA virus-mediated innate immune response by assembling into the HDP-RNP complex, a complex that serves as a platform for IRF3 phosphorylation and subsequent innate immune response activation through the cGAS-STING pathway. Binds to N6-methyladenosine (m6A)-containing mRNAs and contributes to MYC stability by binding to m6A-containing MYC mRNAs. May bind to specific miRNA hairpins. The polypeptide is Matrin-3 (MATR3) (Homo sapiens (Human)).